A 672-amino-acid polypeptide reads, in one-letter code: DNA polymerase eta (672 aa).

A UmuC domain is found at 14–254; it reads IAHVDMDCFY…LPIKKMKQLG (241 aa). Mg(2+) contacts are provided by Asp-18 and Met-19. The Mn(2+) site is built by Asp-18 and Met-19. 2 residues coordinate a 2'-deoxyribonucleoside 5'-triphosphate: Tyr-23 and Arg-60. 2 residues coordinate Mg(2+): Asp-120 and Glu-121. The Mn(2+) site is built by Asp-120 and Glu-121. Glu-121 functions as the Proton acceptor in the catalytic mechanism. DNA-binding stretches follow at residues 318 to 325 and 362 to 383; these read KTFPGPRA and TLHA…PSKS. 2 disordered regions span residues 521–617 and 648–672; these read VSCP…TDWG and QFNT…PLNR. Composition is skewed to polar residues over residues 523–544 and 570–586; these read CPSN…TQTK and YNAT…DSTV. 2 stretches are compositionally biased toward low complexity: residues 587–602 and 651–662; these read SSAS…SHNS and TGKSKGDGSTSS.

Belongs to the DNA polymerase type-Y family. As to quaternary structure, interacts with PCNA1 and PCNA2. The interaction with PCNA2 is required for translesion synthesis (TLS) to repair UV photoproducts. The cofactor is Mg(2+). Mn(2+) is required as a cofactor. In terms of tissue distribution, constitutively expressed in roots, stems, leaves, flowers and siliques.

It localises to the nucleus. It carries out the reaction DNA(n) + a 2'-deoxyribonucleoside 5'-triphosphate = DNA(n+1) + diphosphate. Its activity is regulated as follows. The enzyme in complex with the DNA substrate binds a third divalent metal cation. The binding of this third divalent cation, which is coordinated by water molecules and two oxygen atoms from DNA and dNTP, is essential for catalyzing the DNA synthesis. Its function is as follows. Error-free DNA polymerase specifically involved in DNA repair. Plays an important role in translesion synthesis (TLS), where the normal high fidelity DNA polymerases cannot proceed and DNA synthesis stalls. Plays an important role in the repair of UV-induced pyrimidine dimers and confers resistance to ultraviolet light. Depending on the context, it inserts the correct base, but may cause base transitions and transversions. Forms a Schiff base with 5'-deoxyribose phosphate at abasic sites, but does not have lyase activity. Targets POLI to replication foci. Exhibits cyclobutane dimer nonmutagenic bypass activity in vitro. In Arabidopsis thaliana (Mouse-ear cress), this protein is DNA polymerase eta (POLH).